Reading from the N-terminus, the 494-residue chain is Cheilanthifoline synthase (494 aa).

Residues T4–G24 traverse the membrane as a helical segment. C437 contacts heme.

It belongs to the cytochrome P450 family. Heme serves as cofactor. In terms of tissue distribution, expressed in roots and at lower levels in stems, leaves and plantlets.

The protein resides in the endoplasmic reticulum membrane. The enzyme catalyses (S)-scoulerine + reduced [NADPH--hemoprotein reductase] + O2 = (S)-cheilanthifoline + oxidized [NADPH--hemoprotein reductase] + 2 H2O + H(+). Functionally, methylenedioxy bridge-forming cytochrome P450 involved in the biosynthesis of isoquinoline alkaloids. Converts (S)-scoulerine into (S)-cheilanthifoline, a precursor of sanguinarine. Catalyzes an oxidative reaction that does not incorporate oxygen into the product. The sequence is that of Cheilanthifoline synthase from Argemone mexicana (Mexican prickly poppy).